The sequence spans 1041 residues: Protein SMAX1-like (1041 aa).

The Clp R domain maps to Ile-8–Ala-188. Repeat stretches follow at residues Leu-12–Leu-98 and Val-117–Ala-188. Over residues Pro-189–Gly-205 the composition is skewed to low complexity. 3 disordered regions span residues Pro-189–Leu-214, Glu-482–Ala-513, and Glu-889–Ser-913. Residues Glu-482–Ala-495 are compositionally biased toward basic and acidic residues. Positions Ser-891–Glu-900 are enriched in polar residues.

Belongs to the ClpA/ClpB family.

May act downstream of MAX2 to negatively regulate karrikins/strigolactone responses. Acts probably specifically in the karrikin pathway. May function in a transcriptional corepressor complex. The polypeptide is Protein SMAX1-like (Oryza sativa subsp. japonica (Rice)).